The following is a 157-amino-acid chain: Crossover junction endodeoxyribonuclease RuvC (157 aa).

Active-site residues include Asp-7, Glu-66, and Asp-139. Positions 7, 66, and 139 each coordinate Mg(2+).

Belongs to the RuvC family. As to quaternary structure, homodimer which binds Holliday junction (HJ) DNA. The HJ becomes 2-fold symmetrical on binding to RuvC with unstacked arms; it has a different conformation from HJ DNA in complex with RuvA. In the full resolvosome a probable DNA-RuvA(4)-RuvB(12)-RuvC(2) complex forms which resolves the HJ. Mg(2+) serves as cofactor.

It localises to the cytoplasm. It catalyses the reaction Endonucleolytic cleavage at a junction such as a reciprocal single-stranded crossover between two homologous DNA duplexes (Holliday junction).. Its function is as follows. The RuvA-RuvB-RuvC complex processes Holliday junction (HJ) DNA during genetic recombination and DNA repair. Endonuclease that resolves HJ intermediates. Cleaves cruciform DNA by making single-stranded nicks across the HJ at symmetrical positions within the homologous arms, yielding a 5'-phosphate and a 3'-hydroxyl group; requires a central core of homology in the junction. The consensus cleavage sequence is 5'-(A/T)TT(C/G)-3'. Cleavage occurs on the 3'-side of the TT dinucleotide at the point of strand exchange. HJ branch migration catalyzed by RuvA-RuvB allows RuvC to scan DNA until it finds its consensus sequence, where it cleaves and resolves the cruciform DNA. This is Crossover junction endodeoxyribonuclease RuvC from Campylobacter concisus (strain 13826).